The following is a 222-amino-acid chain: uncharacterized protein (222 aa).

This is an uncharacterized protein from Homo sapiens (Human).